Here is a 148-residue protein sequence, read N- to C-terminus: MF7 protein (148 aa).

This chain is MF7 protein, found in Myxoma virus (strain Lausanne) (MYXV).